A 269-amino-acid polypeptide reads, in one-letter code: Energy-coupling factor transporter ATP-binding protein EcfA1 (269 aa).

The ABC transporter domain maps to 8-242; it reads IVFKNVSFQY…AEELTTIGLD (235 aa). 42-49 provides a ligand contact to ATP; the sequence is GHNGSGKS.

The protein belongs to the ABC transporter superfamily. Energy-coupling factor EcfA family. As to quaternary structure, forms a stable energy-coupling factor (ECF) transporter complex composed of 2 membrane-embedded substrate-binding proteins (S component), 2 ATP-binding proteins (A component) and 2 transmembrane proteins (T component).

Its subcellular location is the cell membrane. ATP-binding (A) component of a common energy-coupling factor (ECF) ABC-transporter complex. Unlike classic ABC transporters this ECF transporter provides the energy necessary to transport a number of different substrates. The protein is Energy-coupling factor transporter ATP-binding protein EcfA1 of Staphylococcus aureus (strain MSSA476).